The chain runs to 324 residues: Zinc transporter ZIP1 (324 aa).

The Extracellular portion of the chain corresponds to 1 to 30 (MGPWGEPELLVWRPEAAASEAPVPMGLEVK). The chain crosses the membrane as a helical span at residues 31 to 51 (LGALVLLLVLTLICSLVPVCV). Residues 52-68 (LRRPGANPEASASRQKA) lie on the Cytoplasmic side of the membrane. The chain crosses the membrane as a helical span at residues 69–89 (LSLVSCFAGGVFLATCLLDLL). Residues 90–104 (PDYLGAIDEALAALH) lie on the Extracellular side of the membrane. Residues 105–125 (VTLQFPLQEFILAMGFFLVLV) traverse the membrane as a helical segment. Residues 126-179 (MEQITLAYKEQSGPPPREETRALLGTVNGGPQHWHDGLGVPQAGGASSAPSALR) are Cytoplasmic-facing. Residues 180 to 200 (ACVLVFSLALHSVFEGLAVGL) traverse the membrane as a helical segment. Topologically, residues 201–206 (QRDQAR) are extracellular. Residues 207 to 227 (AMELCLALLLHKGILAVSLSL) traverse the membrane as a helical segment. Topologically, residues 228–237 (RLLQSHLRAQ) are cytoplasmic. The chain crosses the membrane as a helical span at residues 238–258 (VVAGCGILFSCMTPLGIGLGT). Residues 259 to 272 (ALAESAGPLHQLAQ) are Extracellular-facing. The helical transmembrane segment at 273–293 (SVLEGMAAGTFLYITFLEILP) threads the bilayer. Residues 294–303 (QELATSEQRI) lie on the Cytoplasmic side of the membrane. Residues 304–324 (LKVILLLAGFALLTGLLFIQI) traverse the membrane as a helical segment.

The protein belongs to the ZIP transporter (TC 2.A.5) family.

It is found in the cell membrane. It localises to the endoplasmic reticulum membrane. The catalysed reaction is Zn(2+)(in) = Zn(2+)(out). In terms of biological role, transporter for the divalent cation Zn(2+). Mediates the influx of Zn(2+) into cells from extracellular space. This chain is Zinc transporter ZIP1 (SLC39A1), found in Bos taurus (Bovine).